We begin with the raw amino-acid sequence, 347 residues long: Tryptophan--tRNA ligase (347 aa).

ATP is bound by residues Gln10 to Ser12 and Gly18 to Asn19. The 'HIGH' region signature appears at Ala11–Asn19. Asp140 contributes to the L-tryptophan binding site. Residues Gly152 to Asp154, Ile191, and Lys200 to Ser204 each bind ATP. Positions Lys200–Ser204 match the 'KMSKS' region motif.

The protein belongs to the class-I aminoacyl-tRNA synthetase family. As to quaternary structure, homodimer.

The protein resides in the cytoplasm. It catalyses the reaction tRNA(Trp) + L-tryptophan + ATP = L-tryptophyl-tRNA(Trp) + AMP + diphosphate + H(+). In terms of biological role, catalyzes the attachment of tryptophan to tRNA(Trp). The protein is Tryptophan--tRNA ligase of Mycoplasma genitalium (strain ATCC 33530 / DSM 19775 / NCTC 10195 / G37) (Mycoplasmoides genitalium).